The primary structure comprises 229 residues: Large ribosomal subunit protein uL1 (229 aa).

The protein belongs to the universal ribosomal protein uL1 family. As to quaternary structure, part of the 50S ribosomal subunit.

Its function is as follows. Binds directly to 23S rRNA. The L1 stalk is quite mobile in the ribosome, and is involved in E site tRNA release. In terms of biological role, protein L1 is also a translational repressor protein, it controls the translation of the L11 operon by binding to its mRNA. This is Large ribosomal subunit protein uL1 from Desulforamulus reducens (strain ATCC BAA-1160 / DSM 100696 / MI-1) (Desulfotomaculum reducens).